The chain runs to 422 residues: SH2 domain-containing protein 4A (422 aa).

A phosphoserine mark is found at serine 117 and serine 123. Disordered stretches follow at residues 141-190 and 202-282; these read PQNV…EDEK and SEWQ…VIRT. Composition is skewed to basic and acidic residues over residues 163 to 190 and 212 to 231; these read TKKDDKAQTKDLTKKKDSEELKQTEDEK and KAADEKRRSLAKQAREDYKR. Serine 233 carries the phosphoserine modification. The SH2 domain maps to 316–408; sequence WFHGILTLKK…LGKELLLFPC (93 aa).

In terms of assembly, interacts with ESR1.

The protein resides in the cytoplasm. Inhibits estrogen-induced cell proliferation by competing with PLCG for binding to ESR1, blocking the effect of estrogen on PLCG and repressing estrogen-induced proliferation. May play a role in T-cell development and function. The sequence is that of SH2 domain-containing protein 4A (Sh2d4a) from Rattus norvegicus (Rat).